The sequence spans 95 residues: Cell division topological specificity factor (95 aa).

This sequence belongs to the MinE family.

Functionally, prevents the cell division inhibition by proteins MinC and MinD at internal division sites while permitting inhibition at polar sites. This ensures cell division at the proper site by restricting the formation of a division septum at the midpoint of the long axis of the cell. The chain is Cell division topological specificity factor from Methylorubrum extorquens (strain CM4 / NCIMB 13688) (Methylobacterium extorquens).